Here is an 839-residue protein sequence, read N- to C-terminus: Transcription regulator protein BACH2 (839 aa).

Residues 37–103 form the BTB domain; sequence CDVTLIVERK…AYTAKLLLSR (67 aa). Disordered regions lie at residues 150–170 and 247–331; these read QRPQ…EETM and HGTS…LDRS. A compositionally biased stretch (acidic residues) spans 161–170; sequence GEEEEEEETM. Residues 247 to 263 show a composition bias toward polar residues; that stretch reads HGTSGFASTFSEDSPGN. The span at 297–312 shows a compositional bias: basic and acidic residues; it reads TDIKDRPGDVEMDRKQ. Residue S314 is modified to Phosphoserine. Residues 321 to 331 show a composition bias toward low complexity; the sequence is TPTGAACLDRS. Residues K381 and K420 each participate in a glycyl lysine isopeptide (Lys-Gly) (interchain with G-Cter in SUMO2) cross-link. S520 is subject to Phosphoserine. The segment at 582-609 is disordered; the sequence is QSYGTNSSDESGSFSEADSESCPVQDRG. A compositionally biased stretch (polar residues) spans 583-597; sequence SYGTNSSDESGSFSE. In terms of domain architecture, bZIP spans 645–708; the sequence is FIHDIRRRSK…GELLDNFSCL (64 aa). Residues 650–666 form a basic motif region; that stretch reads RRRSKNRIAAQRCRKRK. Residues 670-677 are leucine-zipper; that stretch reads IQNLECEI. A disordered region spans residues 778 to 813; sequence PWVPSNTSENCTSGRRLEGSDPGTFSERGPPLEARS. Over residues 781–790 the composition is skewed to polar residues; sequence PSNTSENCTS. Residues 819–839 carry the Nuclear export signal motif; the sequence is DFCQEMTEKCTTDEQPRKDYA.

Belongs to the bZIP family. CNC subfamily. In terms of assembly, homodimer; disulfide-linked. Heterodimer of BACH2 and Maf-related transcription factors. Post-translationally, the reversible disulfide bond may provide a mechanism to regulate the activity in oxidative stress responses. In terms of processing, phosphorylation at Ser-520 downstream of the PI-3K pathway promotes nuclear export. As to expression, detected in brain and spleen.

Its subcellular location is the cytoplasm. It is found in the nucleus. Functionally, transcriptional regulator that acts as a repressor or activator. Binds to Maf recognition elements (MARE). Plays an important role in coordinating transcription activation and repression by MAFK. Induces apoptosis in response to oxidative stress through repression of the antiapoptotic factor HMOX1. Positively regulates the nuclear import of actin. Is a key regulator of adaptive immunity, crucial for the maintenance of regulatory T-cell function and B-cell maturation. This chain is Transcription regulator protein BACH2 (Bach2), found in Mus musculus (Mouse).